A 446-amino-acid polypeptide reads, in one-letter code: Tubulin alpha chain-like 3 (446 aa).

Positions 1 to 4 (MREC) match the MREC motif motif. Gln11, Glu78, Ser147, Gly151, Thr152, Thr186, Asn213, and Asn235 together coordinate GTP. Position 78 (Glu78) interacts with Mg(2+). The active site involves Glu261.

Belongs to the tubulin family. Dimer of alpha and beta chains. A typical microtubule is a hollow water-filled tube with an outer diameter of 25 nm and an inner diameter of 15 nM. Alpha-beta heterodimers associate head-to-tail to form protofilaments running lengthwise along the microtubule wall with the beta-tubulin subunit facing the microtubule plus end conferring a structural polarity. Microtubules usually have 13 protofilaments but different protofilament numbers can be found in some organisms and specialized cells. Mg(2+) is required as a cofactor. In terms of processing, some glutamate residues at the C-terminus are polyglycylated, resulting in polyglycine chains on the gamma-carboxyl group. Glycylation is mainly limited to tubulin incorporated into axonemes (cilia and flagella) whereas glutamylation is prevalent in neuronal cells, centrioles, axonemes, and the mitotic spindle. Both modifications can coexist on the same protein on adjacent residues, and lowering polyglycylation levels increases polyglutamylation, and reciprocally. Cilia and flagella glycylation is required for their stability and maintenance. Flagella glycylation controls sperm motility. Post-translationally, some glutamate residues at the C-terminus are polyglutamylated, resulting in polyglutamate chains on the gamma-carboxyl group. Polyglutamylation plays a key role in microtubule severing by spastin (SPAST). SPAST preferentially recognizes and acts on microtubules decorated with short polyglutamate tails: severing activity by SPAST increases as the number of glutamates per tubulin rises from one to eight, but decreases beyond this glutamylation threshold. Glutamylation is also involved in cilia motility.

It is found in the cytoplasm. The protein resides in the cytoskeleton. It carries out the reaction GTP + H2O = GDP + phosphate + H(+). Its function is as follows. Tubulin is the major constituent of microtubules, a cylinder consisting of laterally associated linear protofilaments composed of alpha- and beta-tubulin heterodimers. Microtubules grow by the addition of GTP-tubulin dimers to the microtubule end, where a stabilizing cap forms. Below the cap, tubulin dimers are in GDP-bound state, owing to GTPase activity of alpha-tubulin. This Mus musculus (Mouse) protein is Tubulin alpha chain-like 3 (Tubal3).